Consider the following 448-residue polypeptide: Glucose-6-phosphate isomerase (448 aa).

Glu-290 (proton donor) is an active-site residue. Catalysis depends on residues His-311 and Lys-425.

It belongs to the GPI family.

It is found in the cytoplasm. The enzyme catalyses alpha-D-glucose 6-phosphate = beta-D-fructose 6-phosphate. Its pathway is carbohydrate biosynthesis; gluconeogenesis. It participates in carbohydrate degradation; glycolysis; D-glyceraldehyde 3-phosphate and glycerone phosphate from D-glucose: step 2/4. Its function is as follows. Catalyzes the reversible isomerization of glucose-6-phosphate to fructose-6-phosphate. The protein is Glucose-6-phosphate isomerase of Oceanobacillus iheyensis (strain DSM 14371 / CIP 107618 / JCM 11309 / KCTC 3954 / HTE831).